A 168-amino-acid chain; its full sequence is Small ribosomal subunit protein uS5 (168 aa).

Residues 14 to 77 form the S5 DRBM domain; that stretch reads FEERVVSINR…EAAKKNLITV (64 aa).

This sequence belongs to the universal ribosomal protein uS5 family. As to quaternary structure, part of the 30S ribosomal subunit. Contacts proteins S4 and S8.

Functionally, with S4 and S12 plays an important role in translational accuracy. In terms of biological role, located at the back of the 30S subunit body where it stabilizes the conformation of the head with respect to the body. The sequence is that of Small ribosomal subunit protein uS5 from Lactococcus lactis subsp. cremoris (strain MG1363).